Here is a 181-residue protein sequence, read N- to C-terminus: UPF0200 protein Ta0179 (181 aa).

6–13 (GMPGAGKD) contributes to the ATP binding site.

Belongs to the UPF0200 family.

The protein is UPF0200 protein Ta0179 of Thermoplasma acidophilum (strain ATCC 25905 / DSM 1728 / JCM 9062 / NBRC 15155 / AMRC-C165).